Consider the following 398-residue polypeptide: Phosphoglycerate kinase (398 aa).

Substrate is bound by residues Asp-21–Asn-23, Arg-36, His-59–Arg-62, Arg-118, and Arg-151. Residues Lys-201, Glu-323, and Gly-353–Thr-356 each bind ATP.

Belongs to the phosphoglycerate kinase family. In terms of assembly, monomer.

It localises to the cytoplasm. The catalysed reaction is (2R)-3-phosphoglycerate + ATP = (2R)-3-phospho-glyceroyl phosphate + ADP. The protein operates within carbohydrate degradation; glycolysis; pyruvate from D-glyceraldehyde 3-phosphate: step 2/5. In Ruegeria pomeroyi (strain ATCC 700808 / DSM 15171 / DSS-3) (Silicibacter pomeroyi), this protein is Phosphoglycerate kinase.